The sequence spans 465 residues: Argininosuccinate lyase (465 aa).

The protein belongs to the lyase 1 family. Argininosuccinate lyase subfamily.

The protein resides in the cytoplasm. The catalysed reaction is 2-(N(omega)-L-arginino)succinate = fumarate + L-arginine. Its pathway is amino-acid biosynthesis; L-arginine biosynthesis; L-arginine from L-ornithine and carbamoyl phosphate: step 3/3. This is Argininosuccinate lyase from Nitrobacter winogradskyi (strain ATCC 25391 / DSM 10237 / CIP 104748 / NCIMB 11846 / Nb-255).